The chain runs to 335 residues: Methionine import ATP-binding protein MetN (335 aa).

Residues 2–241 enclose the ABC transporter domain; it reads IEFQRLHKSY…PKHVTTRRFV (240 aa). Position 38–45 (38–45) interacts with ATP; that stretch reads GHSGAGKS.

It belongs to the ABC transporter superfamily. Methionine importer (TC 3.A.1.24) family. As to quaternary structure, the complex is composed of two ATP-binding proteins (MetN), two transmembrane proteins (MetI) and a solute-binding protein (MetQ).

Its subcellular location is the cell inner membrane. It carries out the reaction L-methionine(out) + ATP + H2O = L-methionine(in) + ADP + phosphate + H(+). It catalyses the reaction D-methionine(out) + ATP + H2O = D-methionine(in) + ADP + phosphate + H(+). In terms of biological role, part of the ABC transporter complex MetNIQ involved in methionine import. Responsible for energy coupling to the transport system. This chain is Methionine import ATP-binding protein MetN, found in Xanthomonas oryzae pv. oryzae (strain KACC10331 / KXO85).